Here is a 487-residue protein sequence, read N- to C-terminus: MKLEEKLEHNESLVGKSRPCLHDTHQANGKPIANGNPTANGKVEVYEKQEANGKGNRLGKCLNLYTWQEIQRHSQEADQWLVIDRKVYNVTDWAGKHPGGRRVLNHYAGQDATDAFRAMHLDLGMVKLYLKPLLIGELSPEEPSQEKNKNAQLVEDFRELRKTLEAMNMFSANLRFFFLHLAQILILEISAWLILHHFGSSWLVTILISFLLTVSQAQCSFLQHDLGHLSMFKKSKWNHLMHKFVMCHLKGLSADWWNYRHFQHHVKPNIYPKDPDIDVGPLFLVGDTQPIKYGKKKIKYIDYEKQHLYFYMVALPFLMPVYFNLQSMQVMYLRKYWMDIAWVSSFYIRYFITFGPFYGIFGTVLLIYLVKFIESPWIAYVTQMSHIPMKMSSEENHDWLSTQVVATCNIEQSFFNDWFTGHLNFQIEHHLFPTMPRHNYHKVAPLVKSLCAKHGLQYINKPILKAFGDIVRSLKKSASLWMNAYYE.

A compositionally biased stretch (basic and acidic residues) spans 1–11 (MKLEEKLEHNE). Positions 1–20 (MKLEEKLEHNESLVGKSRPC) are disordered. Residues 1–175 (MKLEEKLEHN…AMNMFSANLR (175 aa)) lie on the Cytoplasmic side of the membrane. Positions 62-139 (LNLYTWQEIQ…LKPLLIGELS (78 aa)) constitute a Cytochrome b5 heme-binding domain. Heme contacts are provided by histidine 97 and histidine 120. Residues 176 to 196 (FFFLHLAQILILEISAWLILH) form a helical membrane-spanning segment. At 197-201 (HFGSS) the chain is on the lumenal side. The helical transmembrane segment at 202–222 (WLVTILISFLLTVSQAQCSFL) threads the bilayer. Over 223–307 (QHDLGHLSMF…IKYIDYEKQH (85 aa)) the chain is Cytoplasmic. Residues 224–228 (HDLGH) carry the Histidine box-1 motif. Residues 261-265 (HFQHH) carry the Histidine box-2 motif. The chain crosses the membrane as a helical span at residues 308-328 (LYFYMVALPFLMPVYFNLQSM). The Lumenal segment spans residues 329 to 349 (QVMYLRKYWMDIAWVSSFYIR). The helical transmembrane segment at 350-370 (YFITFGPFYGIFGTVLLIYLV) threads the bilayer. The Cytoplasmic portion of the chain corresponds to 371–487 (KFIESPWIAY…ASLWMNAYYE (117 aa)). Residues 426-430 (QIEHH) carry the Histidine box-3 motif.

Belongs to the fatty acid desaturase type 1 family.

It is found in the endoplasmic reticulum membrane. Its pathway is lipid metabolism; polyunsaturated fatty acid biosynthesis. This is Fatty acid desaturase 2-like protein FADS2B from Mus musculus (Mouse).